A 20-amino-acid polypeptide reads, in one-letter code: Cytochrome c oxidase subunit 5A-1, mitochondrial (20 aa).

It belongs to the cytochrome c oxidase subunit 5A family. As to quaternary structure, component of the cytochrome c oxidase (complex IV, CIV), a multisubunit enzyme composed of 14 subunits. The complex is composed of a catalytic core of 3 subunits MT-CO1, MT-CO2 and MT-CO3, encoded in the mitochondrial DNA, and 11 supernumerary subunits COX4I, COX5A, COX5B, COX6A, COX6B, COX6C, COX7A, COX7B, COX7C, COX8 and NDUFA4, which are encoded in the nuclear genome. The complex exists as a monomer or a dimer and forms supercomplexes (SCs) in the inner mitochondrial membrane with NADH-ubiquinone oxidoreductase (complex I, CI) and ubiquinol-cytochrome c oxidoreductase (cytochrome b-c1 complex, complex III, CIII), resulting in different assemblies (supercomplex SCI(1)III(2)IV(1) and megacomplex MCI(2)III(2)IV(2)). Interacts with AFG1L. Interacts with RAB5IF.

It localises to the mitochondrion inner membrane. It participates in energy metabolism; oxidative phosphorylation. Its function is as follows. Component of the cytochrome c oxidase, the last enzyme in the mitochondrial electron transport chain which drives oxidative phosphorylation. The respiratory chain contains 3 multisubunit complexes succinate dehydrogenase (complex II, CII), ubiquinol-cytochrome c oxidoreductase (cytochrome b-c1 complex, complex III, CIII) and cytochrome c oxidase (complex IV, CIV), that cooperate to transfer electrons derived from NADH and succinate to molecular oxygen, creating an electrochemical gradient over the inner membrane that drives transmembrane transport and the ATP synthase. Cytochrome c oxidase is the component of the respiratory chain that catalyzes the reduction of oxygen to water. Electrons originating from reduced cytochrome c in the intermembrane space (IMS) are transferred via the dinuclear copper A center (CU(A)) of subunit 2 and heme A of subunit 1 to the active site in subunit 1, a binuclear center (BNC) formed by heme A3 and copper B (CU(B)). The BNC reduces molecular oxygen to 2 water molecules using 4 electrons from cytochrome c in the IMS and 4 protons from the mitochondrial matrix. This Thunnus obesus (Bigeye tuna) protein is Cytochrome c oxidase subunit 5A-1, mitochondrial.